Consider the following 168-residue polypeptide: Photosystem I assembly protein Ycf3 (168 aa).

3 TPR repeats span residues 35–68 (AFTYYRDGMSAQSEGNYAEALQNYYEAMRLEIDP), 72–105 (SYILYNIGLIHTSNGEHMKALEYYFRALERNPFL), and 120–153 (GEKAIQQGDSEIAEAWFDQAAEYWKQALALTPGN).

Belongs to the Ycf3 family.

Its subcellular location is the plastid membrane. Functionally, essential for the assembly of the photosystem I (PSI) complex. May act as a chaperone-like factor to guide the assembly of the PSI subunits. The chain is Photosystem I assembly protein Ycf3 from Cuscuta exaltata (Tall dodder).